We begin with the raw amino-acid sequence, 122 residues long: 5'-AMP-activated protein kinase subunit beta-1 (122 aa).

Phosphoserine is present on residues serine 5, serine 61, serine 66, and serine 73. The glycogen-binding domain stretch occupies residues 33–122 (EVNDKASAQA…TVNNIIQVKK (90 aa)). Threonine 113 carries the post-translational modification Phosphothreonine.

The protein belongs to the 5'-AMP-activated protein kinase beta subunit family. In terms of assembly, AMPK is a heterotrimer of an alpha catalytic subunit (PRKAA1 or PRKAA2), a beta (PRKAB1 or PRKAB2) and a gamma non-catalytic subunits (PRKAG1, PRKAG2 or PRKAG3). Interacts with FNIP1 and FNIP2. Phosphorylated when associated with the catalytic subunit (PRKAA1 or PRKAA2). Phosphorylated by ULK1; leading to negatively regulate AMPK activity and suggesting the existence of a regulatory feedback loop between ULK1 and AMPK.

Its function is as follows. Non-catalytic subunit of AMP-activated protein kinase (AMPK), an energy sensor protein kinase that plays a key role in regulating cellular energy metabolism. In response to reduction of intracellular ATP levels, AMPK activates energy-producing pathways and inhibits energy-consuming processes: inhibits protein, carbohydrate and lipid biosynthesis, as well as cell growth and proliferation. AMPK acts via direct phosphorylation of metabolic enzymes, and by longer-term effects via phosphorylation of transcription regulators. Also acts as a regulator of cellular polarity by remodeling the actin cytoskeleton; probably by indirectly activating myosin. Beta non-catalytic subunit acts as a scaffold on which the AMPK complex assembles, via its C-terminus that bridges alpha (PRKAA1 or PRKAA2) and gamma subunits (PRKAG1, PRKAG2 or PRKAG3). The polypeptide is 5'-AMP-activated protein kinase subunit beta-1 (PRKAB1) (Sus scrofa (Pig)).